The chain runs to 515 residues: Fatty acyl-CoA reductase 1 (515 aa).

Residues Met1–Asn465 lie on the Cytoplasmic side of the membrane. A necessary and sufficient for PEX19-mediated localization into peroxisome membrane region spans residues Ser451–Phe507. Residues Ile466–Ile483 form a helical membrane-spanning segment. Over Ala484–Tyr515 the chain is Peroxisomal.

This sequence belongs to the fatty acyl-CoA reductase family. In terms of assembly, interacts with PEX19; PEX19 mediates the targeting of FAR1 to peroxisomes. As to expression, widely expressed. Expressed in all tissues examined. Highest expression seen in preputial gland. Expressed in the brain where large quantities of ether lipids are synthesized.

The protein resides in the peroxisome membrane. It carries out the reaction a long-chain fatty acyl-CoA + 2 NADPH + 2 H(+) = a long-chain primary fatty alcohol + 2 NADP(+) + CoA. The catalysed reaction is hexadecanoyl-CoA + 2 NADPH + 2 H(+) = hexadecan-1-ol + 2 NADP(+) + CoA. It catalyses the reaction octadecanoyl-CoA + 2 NADPH + 2 H(+) = octadecan-1-ol + 2 NADP(+) + CoA. The enzyme catalyses (9Z)-octadecenoyl-CoA + 2 NADPH + 2 H(+) = (9Z)-octadecen-1-ol + 2 NADP(+) + CoA. It carries out the reaction (9Z,12Z)-octadecadienoyl-CoA + 2 NADPH + 2 H(+) = (9Z,12Z)-octadecadien-1-ol + 2 NADP(+) + CoA. The catalysed reaction is eicosanoyl-CoA + 2 NADPH + 2 H(+) = eicosan-1-ol + 2 NADP(+) + CoA. It catalyses the reaction 16-methylheptadecanoyl-CoA + 2 NADPH + 2 H(+) = 16-methylheptadecan-1-ol + 2 NADP(+) + CoA. The enzyme catalyses 18-methylnonadecanoyl-CoA + 2 NADPH + 2 H(+) = 18-methylnonadecan-1-ol + 2 NADP(+) + CoA. Catalyzes the reduction of saturated and unsaturated C16 or C18 fatty acyl-CoA to fatty alcohols. It plays an essential role in the production of ether lipids/plasmalogens which synthesis requires fatty alcohols. In parallel, it is also required for wax monoesters production since fatty alcohols also constitute a substrate for their synthesis. The sequence is that of Fatty acyl-CoA reductase 1 from Mus musculus (Mouse).